The chain runs to 72 residues: Translation initiation factor IF-1 (72 aa).

Residues 1-72 (MAKDDVIQMQ…SRARIVFRAK (72 aa)) form the S1-like domain.

It belongs to the IF-1 family. As to quaternary structure, component of the 30S ribosomal translation pre-initiation complex which assembles on the 30S ribosome in the order IF-2 and IF-3, IF-1 and N-formylmethionyl-tRNA(fMet); mRNA recruitment can occur at any time during PIC assembly.

It localises to the cytoplasm. Its function is as follows. One of the essential components for the initiation of protein synthesis. Stabilizes the binding of IF-2 and IF-3 on the 30S subunit to which N-formylmethionyl-tRNA(fMet) subsequently binds. Helps modulate mRNA selection, yielding the 30S pre-initiation complex (PIC). Upon addition of the 50S ribosomal subunit IF-1, IF-2 and IF-3 are released leaving the mature 70S translation initiation complex. This is Translation initiation factor IF-1 from Burkholderia mallei (strain NCTC 10247).